Consider the following 398-residue polypeptide: 1-deoxy-D-xylulose 5-phosphate reductoisomerase (398 aa).

The NADPH site is built by Thr21, Gly22, Ser23, Ile24, Gly47, Asn50, and Asn127. A 1-deoxy-D-xylulose 5-phosphate-binding site is contributed by Lys128. Glu129 provides a ligand contact to NADPH. Residue Asp151 participates in Mn(2+) binding. 1-deoxy-D-xylulose 5-phosphate contacts are provided by Ser152, Glu153, Ser177, and His200. Glu153 is a Mn(2+) binding site. An NADPH-binding site is contributed by Gly206. Residues Ser213, Asn218, Lys219, and Glu222 each coordinate 1-deoxy-D-xylulose 5-phosphate. Glu222 contacts Mn(2+).

It belongs to the DXR family. Mg(2+) is required as a cofactor. It depends on Mn(2+) as a cofactor.

It catalyses the reaction 2-C-methyl-D-erythritol 4-phosphate + NADP(+) = 1-deoxy-D-xylulose 5-phosphate + NADPH + H(+). It functions in the pathway isoprenoid biosynthesis; isopentenyl diphosphate biosynthesis via DXP pathway; isopentenyl diphosphate from 1-deoxy-D-xylulose 5-phosphate: step 1/6. Its function is as follows. Catalyzes the NADPH-dependent rearrangement and reduction of 1-deoxy-D-xylulose-5-phosphate (DXP) to 2-C-methyl-D-erythritol 4-phosphate (MEP). This chain is 1-deoxy-D-xylulose 5-phosphate reductoisomerase, found in Mycolicibacterium smegmatis (strain ATCC 700084 / mc(2)155) (Mycobacterium smegmatis).